Reading from the N-terminus, the 307-residue chain is Probable acetylxylan esterase A (307 aa).

An N-terminal signal peptide occupies residues 1 to 19; the sequence is MILLSYLLTYLLCALTCSA. Ser-150 serves as the catalytic Charge relay system. Residues Asn-192 and Asn-270 are each glycosylated (N-linked (GlcNAc...) asparagine).

This sequence belongs to the carbohydrate esterase 1 (CE1) family. AxeA subfamily. As to quaternary structure, monomer.

It is found in the secreted. The catalysed reaction is Deacetylation of xylans and xylo-oligosaccharides.. The protein operates within glycan degradation; xylan degradation. Functionally, acetylxylan esterase involved in the hydrolysis of xylan, a major structural heterogeneous polysaccharide found in plant biomass representing the second most abundant polysaccharide in the biosphere, after cellulose. Degrades acetylated xylans by cleaving acetyl side groups from the hetero-xylan backbone. This Aspergillus flavus protein is Probable acetylxylan esterase A (axeA).